A 231-amino-acid chain; its full sequence is Mediator of RNA polymerase II transcription subunit 18 (231 aa).

Residues 191-218 are a coiled coil; that stretch reads HLTDIEALNKAVKELEKVKTELHGLMNL.

It belongs to the Mediator complex subunit 18 family. Component of the Mediator complex.

The protein resides in the nucleus. Component of the Mediator complex, a coactivator involved in the regulated transcription of nearly all RNA polymerase II-dependent genes. Mediator functions as a bridge to convey information from gene-specific regulatory proteins to the basal RNA polymerase II transcription machinery. Mediator is recruited to promoters by direct interactions with regulatory proteins and serves as a scaffold for the assembly of a functional preinitiation complex with RNA polymerase II and the general transcription factors. This is Mediator of RNA polymerase II transcription subunit 18 (SRB5) from Yarrowia lipolytica (strain CLIB 122 / E 150) (Yeast).